A 157-amino-acid polypeptide reads, in one-letter code: MNKKETRHQLIRSLISETTIHTQQELQERLQKNGITITQATLSRDMKELNLVKVTSGNDTHYEALAISQTRWEHRLRFYMEDALVMLKIVQHQIILKTLPGLAQSFGSILDAMQIPEIVATVCGDDTCLIVCEDNEQAKACYETLSHYTPPFFFSNK.

This sequence belongs to the ArgR family.

The protein resides in the cytoplasm. The protein operates within amino-acid degradation; L-arginine degradation via ADI pathway. Functionally, regulates the transcription of the arc operon, involved in arginine catabolism. This chain is Arginine regulator (argR1), found in Streptococcus pyogenes serotype M3 (strain ATCC BAA-595 / MGAS315).